The sequence spans 561 residues: Mercuric reductase (561 aa).

The HMA domain occupies M1–T65. Positions 11 and 14 each coordinate a metal cation. FAD-binding residues include A110, G130, and T135. C136 and C141 are disulfide-bonded. K145, A211, D403, and V411 together coordinate FAD. Positions 558 and 559 each coordinate Hg(2+).

The protein belongs to the class-I pyridine nucleotide-disulfide oxidoreductase family. Homodimer. FAD serves as cofactor.

The enzyme catalyses Hg + NADP(+) + H(+) = Hg(2+) + NADPH. Resistance to Hg(2+) in bacteria appears to be governed by a specialized system which includes mercuric reductase. MerA protein is responsible for volatilizing mercury as Hg(0). In Acinetobacter calcoaceticus, this protein is Mercuric reductase (merA).